The sequence spans 287 residues: Bifunctional protein FolD (287 aa).

NADP(+) contacts are provided by residues 160–162 (GRS), S189, and T230.

It belongs to the tetrahydrofolate dehydrogenase/cyclohydrolase family. Homodimer.

It carries out the reaction (6R)-5,10-methylene-5,6,7,8-tetrahydrofolate + NADP(+) = (6R)-5,10-methenyltetrahydrofolate + NADPH. The catalysed reaction is (6R)-5,10-methenyltetrahydrofolate + H2O = (6R)-10-formyltetrahydrofolate + H(+). Its pathway is one-carbon metabolism; tetrahydrofolate interconversion. Functionally, catalyzes the oxidation of 5,10-methylenetetrahydrofolate to 5,10-methenyltetrahydrofolate and then the hydrolysis of 5,10-methenyltetrahydrofolate to 10-formyltetrahydrofolate. The chain is Bifunctional protein FolD from Chlamydia abortus (strain DSM 27085 / S26/3) (Chlamydophila abortus).